Here is a 242-residue protein sequence, read N- to C-terminus: Uridylate kinase (242 aa).

ATP is bound at residue 17-20 (KLSG). A UMP-binding site is contributed by Gly59. ATP is bound by residues Gly60 and Arg64. Residues Asp79 and 140–147 (LGNPFFTT) each bind UMP. Thr167, Tyr173, and Asp176 together coordinate ATP.

Belongs to the UMP kinase family. As to quaternary structure, homohexamer.

The protein resides in the cytoplasm. The catalysed reaction is UMP + ATP = UDP + ADP. It participates in pyrimidine metabolism; CTP biosynthesis via de novo pathway; UDP from UMP (UMPK route): step 1/1. Inhibited by UTP. In terms of biological role, catalyzes the reversible phosphorylation of UMP to UDP. This is Uridylate kinase from Buchnera aphidicola subsp. Baizongia pistaciae (strain Bp).